Consider the following 131-residue polypeptide: MDAQLEWASSLVPKRQLQQQQQQEQQQQQQDFHKDQLMTVGMRIRQRVDQGYASRTPSTSDASLQPGVIRDYSSVIVPQFTRSPLPTANSLPPMLINQRTMSTEASSLEKWDVAEPAAEHETMVNGSKRRL.

Disordered stretches follow at residues methionine 1–leucine 37 and serine 107–leucine 131. A compositionally biased stretch (low complexity) spans glutamine 16 to glutamine 30. Over residues serine 107–threonine 122 the composition is skewed to basic and acidic residues.

It belongs to the DIF1/spd1 family. As to quaternary structure, interacts with RNR2 and RNR4. Post-translationally, phosphorylated by DUN1 in response to DNA damage which leads to its degradation.

The protein resides in the cytoplasm. The protein localises to the nucleus. Mediates the nuclear localization of RNR2 and RNR4, 2 subunits of the ribonucleotide reductase. The protein is Damage-regulated import facilitator 1 (DIF1) of Saccharomyces cerevisiae (strain YJM789) (Baker's yeast).